The following is a 291-amino-acid chain: Pantothenate synthetase (291 aa).

ATP is bound at residue 33 to 40 (MGALHEGH). The active-site Proton donor is histidine 40. Glutamine 64 contributes to the (R)-pantoate binding site. Beta-alanine is bound at residue glutamine 64. 157–160 (GEKD) contributes to the ATP binding site. Glutamine 163 serves as a coordination point for (R)-pantoate. ATP contacts are provided by residues valine 186 and 194–197 (LSSR).

This sequence belongs to the pantothenate synthetase family. In terms of assembly, homodimer.

It is found in the cytoplasm. The enzyme catalyses (R)-pantoate + beta-alanine + ATP = (R)-pantothenate + AMP + diphosphate + H(+). It participates in cofactor biosynthesis; (R)-pantothenate biosynthesis; (R)-pantothenate from (R)-pantoate and beta-alanine: step 1/1. Catalyzes the condensation of pantoate with beta-alanine in an ATP-dependent reaction via a pantoyl-adenylate intermediate. This Rubrobacter xylanophilus (strain DSM 9941 / JCM 11954 / NBRC 16129 / PRD-1) protein is Pantothenate synthetase.